We begin with the raw amino-acid sequence, 480 residues long: Alpha-glucosidase (480 aa).

4 to 70 (VKIGIIGAGS…ADLKFEKTTS (67 aa)) serves as a coordination point for NAD(+). Substrate contacts are provided by Asp-119 and Asn-153. Cys-174 provides a ligand contact to Mn(2+). His-175 (proton donor) is an active-site residue. Residue His-203 participates in Mn(2+) binding. Asp-260 acts as the Proton acceptor in catalysis.

This sequence belongs to the glycosyl hydrolase 4 family. Homodimer. NAD(+) serves as cofactor. The cofactor is Mn(2+).

The enzyme catalyses Hydrolysis of terminal, non-reducing (1-&gt;4)-linked alpha-D-glucose residues with release of alpha-D-glucose.. Its activity is regulated as follows. Inhibited by EDTA in vitro. In terms of biological role, is able to hydrolyze diverse types of alpha-glycoside bonds in di- and trisaccharides: alpha-1,4 bonds of maltose and maltotriose, alpha-1,1 bonds of trehalose, alpha-1,2 bonds of sucrose, alpha-1,3 bonds of turanose and melizitose, alpha-1,6 bonds of isomaltose and melibiose. AglA is not specific with respect to the configuration at the C-4 position of its substrates because it also possesses alpha-galactosidase activity. Acts on the substrate from the non-reducing end of the chain. The activity of AglA drops with increasing length of the saccharide chain. Does not hydrolyze alpha-, beta-, and gamma-cyclodextrins or polysaccharides (starch, pullulan, amylose, amylopectin, glycogen). Does not cleave beta-glycosidic bonds in di-, oligo-, or polysaccharides. This is Alpha-glucosidase (aglA) from Thermotoga neapolitana.